The sequence spans 757 residues: Subtilisin-like protease SBT1.7 (757 aa).

An N-terminal signal peptide occupies residues Met-1–Ser-24. A propeptide spanning residues Ser-25 to His-106 is cleaved from the precursor. The 76-residue stretch at Thr-31 to His-106 folds into the Inhibitor I9 domain. A Peptidase S8 domain is found at Arg-102–Thr-610. Asp-139 acts as the Charge relay system in catalysis. Asn-170 carries N-linked (GlcNAc...) asparagine glycosylation. A disordered region spans residues Pro-196–Thr-219. A compositionally biased stretch (basic and acidic residues) spans Asp-198–Gly-213. The active-site Charge relay system is the His-212. N-linked (GlcNAc...) asparagine glycosylation is found at Asn-352, Asn-376, and Asn-379. Ser-542 (charge relay system) is an active-site residue. Asn-631 and Asn-644 each carry an N-linked (GlcNAc...) asparagine glycan.

It belongs to the peptidase S8 family. In terms of tissue distribution, expressed in immature siliques and at lower levels in stems and flowers. Widely expressed at low levels.

The protein resides in the secreted. The protein localises to the cell wall. With respect to regulation, activated by calcium. Inhibited by the serine protease inhibitors 4-(2-aminoethyl)benzenesulphonyl fluoride (AEBSF), PMSF, di-isopropyl phosphofluoridate (DFP) and soybean trypsin inhibitor (SBTI). Not inhibited by benzamidine or iodoacetamide. Leupeptin and pepstatin A have a minor inhibitory action. In terms of biological role, serine protease. Has a substrate preference for the hydrophobic residues Phe and Ala and the basic residue Asp in the P1 position, and for Asp, Leu or Ala in the P1' position. Essential for mucilage release from seed coats. Triggers the accumulation and/or activation of cell wall modifying enzymes necessary either for the loosening of the outer primary cell wall, or to facilitate swelling of the mucilage. This chain is Subtilisin-like protease SBT1.7, found in Arabidopsis thaliana (Mouse-ear cress).